The chain runs to 357 residues: DNA replication and repair protein RecF (357 aa).

30 to 37 (GPNGSGKT) provides a ligand contact to ATP.

Belongs to the RecF family.

It is found in the cytoplasm. The RecF protein is involved in DNA metabolism; it is required for DNA replication and normal SOS inducibility. RecF binds preferentially to single-stranded, linear DNA. It also seems to bind ATP. The polypeptide is DNA replication and repair protein RecF (Vibrio campbellii (strain ATCC BAA-1116)).